The chain runs to 318 residues: Glycine--tRNA ligase alpha subunit (318 aa).

This sequence belongs to the class-II aminoacyl-tRNA synthetase family. As to quaternary structure, tetramer of two alpha and two beta subunits.

It localises to the cytoplasm. It catalyses the reaction tRNA(Gly) + glycine + ATP = glycyl-tRNA(Gly) + AMP + diphosphate. This chain is Glycine--tRNA ligase alpha subunit, found in Methylibium petroleiphilum (strain ATCC BAA-1232 / LMG 22953 / PM1).